The sequence spans 259 residues: Translation initiation factor IF-2, chloroplastic (259 aa).

The tr-type G domain maps to Leu171 to Ile259. Gly180–Thr187 contacts GTP.

Belongs to the TRAFAC class translation factor GTPase superfamily. Classic translation factor GTPase family. IF-2 subfamily.

It is found in the plastid. The protein resides in the chloroplast. In terms of biological role, one of the essential components for the initiation of protein synthesis. Protects formylmethionyl-tRNA from spontaneous hydrolysis and promotes its binding to the 30S ribosomal subunits. Also involved in the hydrolysis of GTP during the formation of the 70S ribosomal complex. The polypeptide is Translation initiation factor IF-2, chloroplastic (infB) (Galdieria sulphuraria (Red alga)).